A 647-amino-acid polypeptide reads, in one-letter code: MEVAAGGGCGAGPPLLLSDSEQQCYSELFARCAGAASGGPGPGPPEATRVAPGTATAAAGPVADLFRASQLPPETLHQITELCGAKRVGYFGPTQFYVALKLIAAAQAGLPVRTESIKCELPLPRFVMSKNDGEIRFGNPAELHGPKVQIPYLTTEKNSFKRMDNEDKQETQSPTMSPLASPPSSPPHYQRVSLSHGYSKLRSGTEQMHPAPYERQPIGQPEGPSSEGPGAKPFRRQASLIRSFSVEREPQENNSNYPDEPWRITEEQREYYVNQFRSLQPDPSSFISGSVAKNFFTKSKLSIPELSYIWELSDADCDGALTLSEFCAAFHLIVARKNGYPLPEGLPPTLQPEYLQAAFPKSKWECAIFDSYSESMPANQQSCDLNRMEKTSVKDVADFPVPTQDVTTADDKQALKSTVNESLPKDVSEDTATSKDYNSLKARPRSRSYSSTSIEEAMKRGEDPPTPPPRPQKTHSRASSLDLNKVFLPSAPAANSGLLPPPPALPPRPCPTQSEPVSEADLHSQLNRAPSQAAESSPTKMDAPHAQPPSKPIRRKFRPENQTTESQEPAAAVGGAVSAAMVKPHPTVQKQSSKQKKAIQTAIRKNKEANAVLARLNSELQQQLKEVHQERIALENQLEQLRPVTVL.

The EH 1 domain maps to glutamate 21–proline 122. The segment at glutamate 156–proline 233 is disordered. Positions asparagine 158 to glutamate 170 are enriched in basic and acidic residues. The segment covering proline 221–glycine 230 has biased composition (low complexity). Serine 239 is modified (phosphoserine). Residues glutamine 268 to phenylalanine 359 enclose the EH 2 domain. The EF-hand domain maps to leucine 301–arginine 336. Positions 314, 316, 318, and 325 each coordinate Ca(2+). The interval proline 402–alanine 478 is disordered. Threonine 466 carries the post-translational modification Phosphothreonine. Phosphoserine is present on serine 480. Residues proline 492–glutamate 568 are disordered. Over residues leucine 499 to cysteine 510 the composition is skewed to pro residues. Residues proline 501–leucine 647 form an interaction with RALBP1 region. Over residues serine 524–threonine 539 the composition is skewed to polar residues. The interval proline 548–leucine 647 is interaction with ASAP1. The stretch at isoleucine 599–glutamine 640 forms a coiled coil.

Interacts with EPN1. Interacts with EPS15 AND EPS15L1. Interacts with RALBP1; can form a ternary complex with activated Ral (RALA or RALB). Interacts with ASAP1; the interaction is direct and this complex can bind paxillin. Also forms a ternary complex with RALBP1 and ASAP1. Interacts with GRB2. Tyrosine-phosphorylated upon stimulation of cells with EGF. Phosphorylation on Tyr-residues induces its association with the EGF receptor probably indirectly through an adapter like GRB2.

It is found in the cytoplasm. In terms of biological role, involved in ligand-dependent receptor mediated endocytosis of the EGF and insulin receptors as part of the Ral signaling pathway. By controlling growth factor receptors endocytosis may regulate cell survival. Through ASAP1 may regulate cell adhesion and migration. In Mus musculus (Mouse), this protein is RalBP1-associated Eps domain-containing protein 2 (Reps2).